A 744-amino-acid polypeptide reads, in one-letter code: NAD(P)H-quinone oxidoreductase subunit 5, chloroplastic (744 aa).

Helical transmembrane passes span 9 to 29 (WIMPFIPLPVPMLIGVGLLLF), 41 to 61 (AFPTLFLLGLVMLLSAYFFIL), 89 to 109 (VDPLTSIMSILITTVGITVLI), 125 to 145 (FSYMTLFHVSMLGLVTSSNLI), 147 to 167 (IYICWEFVGMFSYLLIGFWFT), 185 to 205 (GDFSFLLGILGLYWITGSFEF), 219 to 239 (NEIPFFFLTLCAFLLFGGALA), 258 to 278 (TPISALIHAATMVAAGIFLVA), 280 to 300 (LLPLFIVMPYILNLISFIGII), 327 to 347 (LGYMMLALGMGSYRAALFHLI), 354 to 374 (ALLFLGAGSIIHSMEAFVGYS), 396 to 416 (TSFLLGTLSLCGIPPLACFWS), 425 to 445 (WLYSPIFAIIACSTTGFTAFY), 546 to 566 (LFPMVLLVLFTLFVGAIGIPF), 600 to 620 (FIPNATLSVSLSYFGIVIASV), and 722 to 742 (LLLYFDCVLLFLFISSFLYLF).

The protein belongs to the complex I subunit 5 family. NDH is composed of at least 16 different subunits, 5 of which are encoded in the nucleus.

It is found in the plastid. The protein localises to the chloroplast thylakoid membrane. It catalyses the reaction a plastoquinone + NADH + (n+1) H(+)(in) = a plastoquinol + NAD(+) + n H(+)(out). The enzyme catalyses a plastoquinone + NADPH + (n+1) H(+)(in) = a plastoquinol + NADP(+) + n H(+)(out). In terms of biological role, NDH shuttles electrons from NAD(P)H:plastoquinone, via FMN and iron-sulfur (Fe-S) centers, to quinones in the photosynthetic chain and possibly in a chloroplast respiratory chain. The immediate electron acceptor for the enzyme in this species is believed to be plastoquinone. Couples the redox reaction to proton translocation, and thus conserves the redox energy in a proton gradient. The chain is NAD(P)H-quinone oxidoreductase subunit 5, chloroplastic (ndhF) from Pelargonium hortorum (Common geranium).